The chain runs to 467 residues: Flagellum-specific ATP synthase (467 aa).

180–187 (AGSGVGKS) provides a ligand contact to ATP.

It belongs to the ATPase alpha/beta chains family.

The protein localises to the cytoplasm. It catalyses the reaction ATP + H2O + 4 H(+)(in) = ADP + phosphate + 5 H(+)(out). Its function is as follows. Probable catalytic subunit of a protein translocase for flagellum-specific export, or a proton translocase involved in local circuits at the flagellum. This Rhizobium meliloti (strain 1021) (Ensifer meliloti) protein is Flagellum-specific ATP synthase (fliI).